The following is a 152-amino-acid chain: Protein SprT-like (152 aa).

One can recognise a SprT-like domain in the interval 7–148 (QRLVEEVSLQ…GKCKGKLNLI (142 aa)). Histidine 67 is a binding site for Zn(2+). Glutamate 68 is an active-site residue. Histidine 71 is a binding site for Zn(2+).

The protein belongs to the SprT family. The cofactor is Zn(2+).

It is found in the cytoplasm. This chain is Protein SprT-like, found in Bacillus anthracis (strain A0248).